We begin with the raw amino-acid sequence, 445 residues long: Probable spore coat protein sigD (445 aa).

A signal peptide spans 1 to 20; it reads MKKVITLLALMAAAQIYAQG. The DSCP-N domain occupies 21–139; the sequence is QECINLSENE…GHGVCEDFNR (119 aa). Polar residues predominate over residues 141-159; it reads ESGSGNKEQISTTGNTGPQ. Residues 141–161 form a disordered region; that stretch reads ESGSGNKEQISTTGNTGPQTR. 6 consecutive Follistatin-like domains span residues 178-201, 213-237, 272-295, 324-348, 368-391, and 416-439; these read ACTN…AHCY, GCLN…AHCV, ICSN…AQCV, VCSN…ADCL, VCSN…AQCA, and VCQN…GECV.

Functionally, may contribute to the structure of the coat at the interface between the middle, cellulosic layer and the outer, electron-dense, proteinaceous layer. The polypeptide is Probable spore coat protein sigD (sigD) (Dictyostelium discoideum (Social amoeba)).